The chain runs to 214 residues: Putative AgrB-like protein 2 (214 aa).

The next 5 helical transmembrane spans lie at 41-61, 83-103, 109-129, 154-174, and 179-199; these read IISVLILGLVFNIALEALIFL, TLLGIIISICIGFLIKSSFFA, LVVFIGIVIFVFGYFIVFKFA, ILTIYLFIEVLSIILYYNSGW, and PVMLSIIFGVAWQCMTLTYIG.

Belongs to the AgrB family.

The protein localises to the cell membrane. Its function is as follows. May be involved in the proteolytic processing of a quorum sensing system signal molecule precursor. This is Putative AgrB-like protein 2 from Clostridium perfringens (strain 13 / Type A).